The sequence spans 1109 residues: ABC transporter G family member 28 (1109 aa).

Helical transmembrane passes span 5–25 and 291–311; these read NSYF…LILQ and NITA…IILY. Residues 325-411 form a disordered region; that stretch reads QAKSREKAVQ…DTKKGKKKEK (87 aa). The span at 339–357 shows a compositional bias: basic and acidic residues; it reads SQSREKWKSAKDIAKKHAT. Residues 499 to 741 form the ABC transporter domain; that stretch reads VAFKDLSITL…FSSLGIVVPE (243 aa). 533 to 540 is an ATP binding site; sequence GPSGAGKT. The ABC transmembrane type-2 domain maps to 859-1056; the sequence is QQYRYFLGRL…ALEAFVVSNA (198 aa). A run of 6 helical transmembrane segments spans residues 879-899, 904-924, 954-974, 986-1006, 1008-1028, and 1084-1104; these read LAVD…LAKV, FGAM…KITA, TVDH…FYFF, VVLI…AILF, PGPA…IATS, and CLVF…FCMV.

Belongs to the ABC transporter superfamily. ABCG family. Eye pigment precursor importer (TC 3.A.1.204) subfamily.

It localises to the membrane. The polypeptide is ABC transporter G family member 28 (ABCG28) (Arabidopsis thaliana (Mouse-ear cress)).